Reading from the N-terminus, the 735-residue chain is Peroxisomal multifunctional enzyme type 2 (735 aa).

The tract at residues 1–305 (MASPLRFDGR…VEVLHKVDSE (305 aa)) is (3R)-hydroxyacyl-CoA dehydrogenase. Residues 13 to 37 (LVTGAGGGLGRAYALAFAERGALVI), Leu-21, and Asp-40 each bind NAD(+). Lys-46 carries the N6-acetyllysine; alternate modification. Lys-46 is subject to N6-succinyllysine; alternate. Residue Ser-52 is modified to Phosphoserine. An N6-succinyllysine mark is found at Lys-57 and Lys-68. 75-76 (SV) lines the NAD(+) pocket. At Lys-84 the chain carries N6-succinyllysine. An NAD(+)-binding site is contributed by Asn-99. Ser-151 is a binding site for substrate. Residue Tyr-164 is the Proton acceptor of the active site. NAD(+) contacts are provided by residues 164–168 (YSAAK) and 196–199 (AGSR). Thr-265 is subject to Phosphothreonine. Lys-275 is modified (N6-succinyllysine). Phosphoserine is present on residues Ser-304 and Ser-308. Residues 321–621 (SGFVGAVGHK…TQTPSEGGEL (301 aa)) form an enoyl-CoA hydratase 2 region. Lys-355 carries the N6-succinyllysine modification. 405 to 406 (HG) contacts (3R)-3-hydroxydecanoyl-CoA. At Lys-423 the chain carries N6-succinyllysine. (3R)-3-hydroxydecanoyl-CoA-binding positions include Lys-434, 509–514 (DWNPLH), Gly-532, and Phe-562. Positions 483–599 (VPNRPPDAVL…HETGDVVISN (117 aa)) constitute a MaoC-like domain. Lys-564 carries the N6-acetyllysine modification. An N6-succinyllysine mark is found at Lys-578 and Lys-662. The SCP2 domain maps to 623 to 735 (SALVFGEIGR…QMILKDYAKL (113 aa)). Position 668 is an N6-acetyllysine (Lys-668). A substrate-binding site is contributed by Gln-705. Lys-706 bears the N6-acetyllysine mark. Gln-723 contacts substrate. An N6-succinyllysine modification is found at Lys-724. A Microbody targeting signal motif is present at residues 733-735 (AKL).

It belongs to the short-chain dehydrogenases/reductases (SDR) family. Homodimer. In terms of tissue distribution, present in many tissues with highest concentrations in liver and kidney.

The protein localises to the peroxisome. The catalysed reaction is a (3R)-3-hydroxyacyl-CoA + NAD(+) = a 3-oxoacyl-CoA + NADH + H(+). The enzyme catalyses (24R,25R)-3alpha,7alpha,12alpha,24-tetrahydroxy-5beta-cholestan-26-oyl-CoA = (24E)-3alpha,7alpha,12alpha-trihydroxy-5beta-cholest-24-en-26-oyl-CoA + H2O. It catalyses the reaction a (3R)-3-hydroxyacyl-CoA = a (2E)-enoyl-CoA + H2O. It carries out the reaction (2E)-octenoyl-CoA + H2O = (3R)-hydroxyoctanoyl-CoA. The catalysed reaction is (3R)-hydroxyoctanoyl-CoA + NAD(+) = 3-oxooctanoyl-CoA + NADH + H(+). The enzyme catalyses (3R)-hydroxyhexadecanoyl-CoA + NAD(+) = 3-oxohexadecanoyl-CoA + NADH + H(+). It catalyses the reaction (2E)-hexadecenedioyl-CoA + H2O = (3R)-hydroxyhexadecanedioyl-CoA. It carries out the reaction (3R)-hydroxyhexadecanedioyl-CoA + NAD(+) = 3-oxohexadecanedioyl-CoA + NADH + H(+). The catalysed reaction is (3R)-hydroxyhexadecanoyl-CoA = (2E)-hexadecenoyl-CoA + H2O. The enzyme catalyses (3R)-3-hydroxydecanoyl-CoA = (2E)-decenoyl-CoA + H2O. It catalyses the reaction (3R)-3-hydroxydecanoyl-CoA + NAD(+) = 3-oxodecanoyl-CoA + NADH + H(+). It carries out the reaction (24R,25R)-3alpha,7alpha,12alpha,24-tetrahydroxy-5beta-cholestan-26-oyl-CoA + NAD(+) = 3alpha,7alpha,12alpha-trihydroxy-24-oxo-5beta-cholestan-26-oyl-CoA + NADH + H(+). It participates in lipid metabolism; fatty acid beta-oxidation. In terms of biological role, bifunctional enzyme acting on the peroxisomal fatty acid beta-oxidation pathway. Catalyzes two of the four reactions in fatty acid degradation: hydration of 2-enoyl-CoA (trans-2-enoyl-CoA) to produce (3R)-3-hydroxyacyl-CoA, and dehydrogenation of (3R)-3-hydroxyacyl-CoA to produce 3-ketoacyl-CoA (3-oxoacyl-CoA), which is further metabolized by SCPx. Can use straight-chain and branched-chain fatty acids, as well as bile acid intermediates as substrates. This chain is Peroxisomal multifunctional enzyme type 2, found in Mus musculus (Mouse).